Here is an 86-residue protein sequence, read N- to C-terminus: Weak toxin 1 (86 aa).

Positions 1 to 23 (MKTLLLTLVVVAIVCLDLGYTLT) are cleaved as a signal peptide. Cystine bridges form between Cys24/Cys45, Cys27/Cys32, Cys38/Cys63, Cys67/Cys78, and Cys79/Cys84.

The protein belongs to the three-finger toxin family. Ancestral subfamily. Orphan group II sub-subfamily. In terms of tissue distribution, expressed by the venom gland.

It localises to the secreted. Binds with low affinity to muscular (alpha-1-beta-1-delta-epsilon/CHRNA1-CHRNB1-CHRND-CHRNE) and very low affinity to neuronal (alpha-7/CHRNA7) nicotinic acetylcholine receptor (nAChR). This chain is Weak toxin 1, found in Bungarus candidus (Malayan krait).